The primary structure comprises 512 residues: Histidine ammonia-lyase (512 aa).

The 5-imidazolinone (Ala-Gly) cross-link spans 142–144 (ASG). Ser143 carries the 2,3-didehydroalanine (Ser) modification.

This sequence belongs to the PAL/histidase family. Contains an active site 4-methylidene-imidazol-5-one (MIO), which is formed autocatalytically by cyclization and dehydration of residues Ala-Ser-Gly.

The protein localises to the cytoplasm. It carries out the reaction L-histidine = trans-urocanate + NH4(+). It participates in amino-acid degradation; L-histidine degradation into L-glutamate; N-formimidoyl-L-glutamate from L-histidine: step 1/3. This chain is Histidine ammonia-lyase, found in Bartonella quintana (strain Toulouse) (Rochalimaea quintana).